The sequence spans 275 residues: uncharacterized protein (275 aa).

Residues 20-22 (RGQ), 41-42 (DI), 80-81 (DV), and N107 each bind NAD(+). S160 is a substrate binding site. Y173 acts as the Proton acceptor in catalysis. NAD(+)-binding positions include K177 and 206-208 (VET).

It belongs to the short-chain dehydrogenases/reductases (SDR) family.

This is an uncharacterized protein from Mycolicibacterium paratuberculosis (strain ATCC BAA-968 / K-10) (Mycobacterium paratuberculosis).